A 452-amino-acid chain; its full sequence is uncharacterized protein (452 aa).

7 consecutive transmembrane segments (helical) span residues 18 to 38 (PIIE…VLAK), 81 to 101 (LLPV…FLLA), 269 to 289 (IVLL…ALFI), 317 to 337 (AGQV…ATDI), 354 to 374 (VIIV…LPAF), 390 to 410 (VFVV…LTQI), and 428 to 448 (SYAV…LLVV).

The protein belongs to the auxin efflux carrier (TC 2.A.69) family.

The protein localises to the membrane. This is an uncharacterized protein from Schizosaccharomyces pombe (strain 972 / ATCC 24843) (Fission yeast).